The chain runs to 382 residues: 1-deoxy-D-xylulose 5-phosphate reductoisomerase (382 aa).

The NADPH site is built by T10, G11, S12, I13, N38, and N120. Residue K121 coordinates 1-deoxy-D-xylulose 5-phosphate. E122 is a binding site for NADPH. D146 contributes to the Mn(2+) binding site. 1-deoxy-D-xylulose 5-phosphate is bound by residues S147, E148, S172, and H195. E148 contributes to the Mn(2+) binding site. G201 lines the NADPH pocket. 4 residues coordinate 1-deoxy-D-xylulose 5-phosphate: S208, N213, K214, and E217. E217 is a binding site for Mn(2+).

This sequence belongs to the DXR family. Mg(2+) is required as a cofactor. Requires Mn(2+) as cofactor.

The catalysed reaction is 2-C-methyl-D-erythritol 4-phosphate + NADP(+) = 1-deoxy-D-xylulose 5-phosphate + NADPH + H(+). It participates in isoprenoid biosynthesis; isopentenyl diphosphate biosynthesis via DXP pathway; isopentenyl diphosphate from 1-deoxy-D-xylulose 5-phosphate: step 1/6. Its function is as follows. Catalyzes the NADPH-dependent rearrangement and reduction of 1-deoxy-D-xylulose-5-phosphate (DXP) to 2-C-methyl-D-erythritol 4-phosphate (MEP). The polypeptide is 1-deoxy-D-xylulose 5-phosphate reductoisomerase (Thermoanaerobacter sp. (strain X514)).